A 385-amino-acid polypeptide reads, in one-letter code: S-adenosylmethionine synthase (385 aa).

ATP is bound at residue histidine 15. Aspartate 17 contributes to the Mg(2+) binding site. K(+) is bound at residue glutamate 43. The L-methionine site is built by glutamate 56 and glutamine 99. The interval 99–109 is flexible loop; that stretch reads QSPDINKGINN. ATP-binding positions include 164–166, 230–231, aspartate 239, 245–246, alanine 262, and lysine 266; these read DAK, RF, and RK. Aspartate 239 contacts L-methionine. Residue lysine 270 participates in L-methionine binding.

The protein belongs to the AdoMet synthase family. In terms of assembly, homotetramer; dimer of dimers. The cofactor is Mg(2+). Requires K(+) as cofactor.

The protein localises to the cytoplasm. The enzyme catalyses L-methionine + ATP + H2O = S-adenosyl-L-methionine + phosphate + diphosphate. Its pathway is amino-acid biosynthesis; S-adenosyl-L-methionine biosynthesis; S-adenosyl-L-methionine from L-methionine: step 1/1. In terms of biological role, catalyzes the formation of S-adenosylmethionine (AdoMet) from methionine and ATP. The overall synthetic reaction is composed of two sequential steps, AdoMet formation and the subsequent tripolyphosphate hydrolysis which occurs prior to release of AdoMet from the enzyme. The sequence is that of S-adenosylmethionine synthase from Baumannia cicadellinicola subsp. Homalodisca coagulata.